The following is a 91-amino-acid chain: PqqA binding protein (91 aa).

Belongs to the PqqD family. In terms of assembly, monomer. Interacts with PqqE.

It functions in the pathway cofactor biosynthesis; pyrroloquinoline quinone biosynthesis. In terms of biological role, functions as a PqqA binding protein and presents PqqA to PqqE, in the pyrroloquinoline quinone (PQQ) biosynthetic pathway. The polypeptide is PqqA binding protein (Pseudomonas fluorescens (strain ATCC BAA-477 / NRRL B-23932 / Pf-5)).